Consider the following 457-residue polypeptide: Peptidyl-prolyl cis-trans isomerase FKBP5 (457 aa).

An N-acetylmethionine modification is found at Met1. A disordered region spans residues 1–26; that stretch reads MTTDEGAKNSGESPTATVAEQGEDIT. Residue Ser13 is modified to Phosphoserine. Position 28 is an N6-acetyllysine (Lys28). The PPIase FKBP-type 1 domain occupies 50 to 138; the sequence is GDKVYVHYKG…FFEIELLDFK (89 aa). At Lys155 the chain carries N6-acetyllysine. A PPIase FKBP-type 2 domain is found at 165–251; that stretch reads GATVEIHLEG…IYEVTLKSFE (87 aa). TPR repeat units follow at residues 268-301, 317-350, and 351-384; these read AAIV…LEME, LAAF…DSAN, and EKGL…NPQN. A disordered region spans residues 421 to 457; it reads AKEEANKAMGKKTSEGVTNEKGTDSSAVEEEKAEGHV. The residue at position 445 (Ser445) is a Phosphoserine.

As to quaternary structure, part of a heteromultimeric cytoplasmic complex with HSP90AA1, HSPA1A/HSPA1B and steroid receptors. Upon ligand binding dissociates from the complex and FKBP4 takes its place. Interacts with functionally mature heterooligomeric progesterone receptor complexes along with HSP90 and TEBP. Interacts with NR3C1. Interacts with Akt/AKT1 and PHLPP1; enhancing dephosphorylation and subsequent activation of Akt/AKT1. Interacts with IFI44L; this interaction modulates the kinase activity of IKBKB and IKBKE. Interacts with IKBKB and IKBKE. Acetylation impairs ability to promote interaction between Akt/AKT1 and PHLPP1. Deacetylation by SIRT7 promotes interaction between Akt/AKT1 and PHLPP1, leading to suppress Akt/AKT1 activation. In terms of processing, ubiquitinated, leading to degradation in a proteasome-dependent manner. Deubiquitinated by USP49, leading to stabilization.

The protein localises to the cytoplasm. It is found in the nucleus. The catalysed reaction is [protein]-peptidylproline (omega=180) = [protein]-peptidylproline (omega=0). With respect to regulation, inhibited by both FK506 and rapamycin. Immunophilin protein with PPIase and co-chaperone activities. Component of unligated steroid receptors heterocomplexes through interaction with heat-shock protein 90 (HSP90). Plays a role in the intracellular trafficking of heterooligomeric forms of steroid hormone receptors maintaining the complex into the cytoplasm when unliganded. Acts as a regulator of Akt/AKT1 activity by promoting the interaction between Akt/AKT1 and PHLPP1, thereby enhancing dephosphorylation and subsequent activation of Akt/AKT1. Interacts with IKBKE and IKBKB which facilitates IKK complex assembly leading to increased IKBKE and IKBKB kinase activity, NF-kappaB activation, and IFN production. This is Peptidyl-prolyl cis-trans isomerase FKBP5 (FKBP5) from Chlorocebus aethiops (Green monkey).